A 347-amino-acid polypeptide reads, in one-letter code: MTGSFSVKLKSKKGQFIVNDLNEHTTLGELKTKIVQATDIEATQLHVLVGYPPKPLDLSQQQEQRALKAVGINSGETLIVEEKAAPAPAAPVPGGTTVEDDEALARRLQAEEEAQLLQETAGGPVAQAADYQLPVAPTESGPNGDFNGILLKKVVPADNSCLFTSIRFVLNGKVDNEGSEMMRHIIAQEVAADPQSYNDAVLGKSNAEYCAWIQKADSWGGAIEVSILSNYYGIEIDVVDIQNAIINRFGEDKNFGLRVFLLFDGIHYDPLYMETSPSAAPATIFPVEELGVYQQAEQLANEAQSSRQYTNVDKFTLRCMQCDVRLVGQVQAQEHAKQTGHKNFGEI.

The 83-residue stretch at 5 to 87 folds into the Ubiquitin-like domain; it reads FSVKLKSKKG…LIVEEKAAPA (83 aa). The UBX-like stretch occupies residues 8–89; the sequence is KLKSKKGQFI…VEEKAAPAPA (82 aa). The OTU domain maps to 150–274; sequence LLKKVVPADN…GIHYDPLYME (125 aa). Residues 155-161 are cys-loop; the sequence is VPADNSC. Asp-158 is an active-site residue. Cys-161 (nucleophile) is an active-site residue. Residues 213–223 are variable-loop; that stretch reads IQKADSWGGAI. Residues 263–267 form a his-loop region; the sequence is FDGIH. Ile-266 lines the substrate pocket. His-267 is a catalytic residue. The segment at 290-295 is S2 site; the sequence is LGVYQQ. The C2H2-type zinc-finger motif lies at 317–341; sequence LRCMQCDVRLVGQVQAQEHAKQTGH. Residue His-341 is part of the active site.

It carries out the reaction Thiol-dependent hydrolysis of ester, thioester, amide, peptide and isopeptide bonds formed by the C-terminal Gly of ubiquitin (a 76-residue protein attached to proteins as an intracellular targeting signal).. In terms of biological role, hydrolase that can remove conjugated ubiquitin from proteins and may therefore play an important regulatory role at the level of protein turnover by preventing degradation. Involved in the regulation of DNA damage repair. This Drosophila melanogaster (Fruit fly) protein is Ubiquitin thioesterase Otu1.